We begin with the raw amino-acid sequence, 424 residues long: Homeobox even-skipped homolog protein 2 (424 aa).

Disordered regions lie at residues 18–65 (PAGK…DTPT) and 132–178 (TTQL…GPDQ). Polar residues-rich tracts occupy residues 50-65 (RPTS…DTPT) and 132-145 (TTQL…VYSD). Low complexity predominate over residues 146–175 (NGSSTNTSSNGSNITNLNGNSSSIGNSGSG). The segment at residues 179–238 (VRRYRTAFTREQIGRLEKEFYRENYVSRPRRCELAAALNLPETTIKVWFQNRRMKDKRQR) is a DNA-binding region (homeobox).

It belongs to the even-skipped homeobox family.

The protein resides in the nucleus. This chain is Homeobox even-skipped homolog protein 2 (EVX2), found in Heterodontus francisci (Horn shark).